Consider the following 280-residue polypeptide: tRNA(Ile)-lysidine synthase, plastid (280 aa).

Residue 28-33 coordinates ATP; it reads SAGQDS.

It belongs to the tRNA(Ile)-lysidine synthase family.

The protein resides in the plastid. The catalysed reaction is cytidine(34) in tRNA(Ile2) + L-lysine + ATP = lysidine(34) in tRNA(Ile2) + AMP + diphosphate + H(+). Its function is as follows. Ligates lysine onto the cytidine present at position 34 of the AUA codon-specific tRNA(Ile) that contains the anticodon CAU, in an ATP-dependent manner. Cytidine is converted to lysidine, thus changing the amino acid specificity of the tRNA from methionine to isoleucine. This chain is tRNA(Ile)-lysidine synthase, plastid (tilS), found in Helicosporidium sp. subsp. Simulium jonesii (Green alga).